A 590-amino-acid chain; its full sequence is Suprabasin (590 aa).

The signal sequence occupies residues 1–25 (MHLARLVGSCSLLLLLGALSGWAAS). Disordered regions lie at residues 182–213 (GNEA…AHHG), 242–266 (FGQG…GVHH), 297–338 (GQGA…GVHH), and 545–570 (LNGN…SGAS). Composition is skewed to low complexity over residues 190 to 200 (QGVHHAAGQAG), 243 to 254 (GQGAHHAAGQAG), 297 to 330 (GQGA…NEAG), and 546 to 559 (NGNH…HQGG). The span at 560 to 570 (ATTTPLASGAS) shows a compositional bias: polar residues.

As to expression, detected in thymus, uterus and esophagus.

It is found in the secreted. The chain is Suprabasin (SBSN) from Homo sapiens (Human).